The sequence spans 416 residues: Serine hydroxymethyltransferase (416 aa).

(6S)-5,6,7,8-tetrahydrofolate is bound by residues Leu-121 and 125 to 127 (GHL). Lys-229 is modified (N6-(pyridoxal phosphate)lysine).

The protein belongs to the SHMT family. As to quaternary structure, homodimer. The cofactor is pyridoxal 5'-phosphate.

The protein localises to the cytoplasm. The catalysed reaction is (6R)-5,10-methylene-5,6,7,8-tetrahydrofolate + glycine + H2O = (6S)-5,6,7,8-tetrahydrofolate + L-serine. The protein operates within one-carbon metabolism; tetrahydrofolate interconversion. It participates in amino-acid biosynthesis; glycine biosynthesis; glycine from L-serine: step 1/1. Its function is as follows. Catalyzes the reversible interconversion of serine and glycine with tetrahydrofolate (THF) serving as the one-carbon carrier. This reaction serves as the major source of one-carbon groups required for the biosynthesis of purines, thymidylate, methionine, and other important biomolecules. Also exhibits THF-independent aldolase activity toward beta-hydroxyamino acids, producing glycine and aldehydes, via a retro-aldol mechanism. This is Serine hydroxymethyltransferase from Neisseria meningitidis serogroup B (strain ATCC BAA-335 / MC58).